We begin with the raw amino-acid sequence, 197 residues long: Ubiquitin-conjugating enzyme E2 T (197 aa).

Residues 2–152 enclose the UBC core domain; that stretch reads QRASRLKREL…ARQWTEKHAR (151 aa). Cys-86 serves as the catalytic Glycyl thioester intermediate. Glycyl lysine isopeptide (Lys-Gly) (interchain with G-Cter in ubiquitin) cross-links involve residues Lys-91 and Lys-182. Residues 149 to 197 are disordered; that stretch reads KHARQKQKADEEEMLDNLPEAGDSRVHNSTQKRKASQLVGIEKKFHPDV. Ser-184 is subject to Phosphoserine. Glycyl lysine isopeptide (Lys-Gly) (interchain with G-Cter in SUMO2) cross-links involve residues Lys-191 and Lys-192.

This sequence belongs to the ubiquitin-conjugating enzyme family. Directly interacts with FANCL. Interacts with BRCA1. Auto-ubiquitinated. Effects of auto-monoubiquitination at Lys-91 and Lys-182 are unclear: according to a report, monoubiquitination inactivates E2 enzyme activity. In contrast, according to another report, autoubiquitination does not affect E2 enzyme activity.

Its subcellular location is the nucleus. The catalysed reaction is S-ubiquitinyl-[E1 ubiquitin-activating enzyme]-L-cysteine + [E2 ubiquitin-conjugating enzyme]-L-cysteine = [E1 ubiquitin-activating enzyme]-L-cysteine + S-ubiquitinyl-[E2 ubiquitin-conjugating enzyme]-L-cysteine.. It participates in protein modification; protein ubiquitination. Functionally, accepts ubiquitin from the E1 complex and catalyzes its covalent attachment to other proteins. Catalyzes monoubiquitination. Involved in mitomycin-C (MMC)-induced DNA repair. Acts as a specific E2 ubiquitin-conjugating enzyme for the Fanconi anemia complex by associating with E3 ubiquitin-protein ligase FANCL and catalyzing monoubiquitination of FANCD2, a key step in the DNA damage pathway. Also mediates monoubiquitination of FANCL and FANCI. May contribute to ubiquitination and degradation of BRCA1. In vitro able to promote polyubiquitination using all 7 ubiquitin Lys residues, but may prefer 'Lys-11'-, 'Lys-27'-, 'Lys-48'- and 'Lys-63'-linked polyubiquitination. This Homo sapiens (Human) protein is Ubiquitin-conjugating enzyme E2 T (UBE2T).